The primary structure comprises 68 residues: MPFINIKLVPENGGPTNEQKQQLIEGVSDLMVKVLNKNKASIVVIIDEVDSNNYGLGGESIHHLRQKN.

Proline 2 serves as the catalytic Proton acceptor; via imino nitrogen.

Belongs to the 4-oxalocrotonate tautomerase family.

The sequence is that of Probable tautomerase jhp_0858 from Helicobacter pylori (strain J99 / ATCC 700824) (Campylobacter pylori J99).